Here is a 114-residue protein sequence, read N- to C-terminus: T cell receptor alpha variable 10 (114 aa).

A signal peptide spans 1 to 21; the sequence is MKKHLTTFLVILWLYFYRGNG. One can recognise an Ig-like domain in the interval 23 to 114; the sequence is NQVEQSPQSL…DSASYICVVS (92 aa). Residues Asn39 and Asn45 are each glycosylated (N-linked (GlcNAc...) asparagine). Cysteines 44 and 111 form a disulfide.

Alpha-beta TR is a heterodimer composed of an alpha and beta chain; disulfide-linked. The alpha-beta TR is associated with the transmembrane signaling CD3 coreceptor proteins to form the TR-CD3 (TcR or TCR). The assembly of alpha-beta TR heterodimers with CD3 occurs in the endoplasmic reticulum where a single alpha-beta TR heterodimer associates with one CD3D-CD3E heterodimer, one CD3G-CD3E heterodimer and one CD247 homodimer forming a stable octameric structure. CD3D-CD3E and CD3G-CD3E heterodimers preferentially associate with TR alpha and TR beta chains, respectively. The association of the CD247 homodimer is the last step of TcR assembly in the endoplasmic reticulum and is required for transport to the cell surface.

It is found in the cell membrane. V region of the variable domain of T cell receptor (TR) alpha chain that participates in the antigen recognition. Alpha-beta T cell receptors are antigen specific receptors which are essential to the immune response and are present on the cell surface of T lymphocytes. Recognize peptide-major histocompatibility (MH) (pMH) complexes that are displayed by antigen presenting cells (APC), a prerequisite for efficient T cell adaptive immunity against pathogens. Binding of alpha-beta TR to pMH complex initiates TR-CD3 clustering on the cell surface and intracellular activation of LCK that phosphorylates the ITAM motifs of CD3G, CD3D, CD3E and CD247 enabling the recruitment of ZAP70. In turn ZAP70 phosphorylates LAT, which recruits numerous signaling molecules to form the LAT signalosome. The LAT signalosome propagates signal branching to three major signaling pathways, the calcium, the mitogen-activated protein kinase (MAPK) kinase and the nuclear factor NF-kappa-B (NF-kB) pathways, leading to the mobilization of transcription factors that are critical for gene expression and essential for T cell growth and differentiation. The T cell repertoire is generated in the thymus, by V-(D)-J rearrangement. This repertoire is then shaped by intrathymic selection events to generate a peripheral T cell pool of self-MH restricted, non-autoaggressive T cells. Post-thymic interaction of alpha-beta TR with the pMH complexes shapes TR structural and functional avidity. The polypeptide is T cell receptor alpha variable 10 (Homo sapiens (Human)).